The following is a 172-amino-acid chain: Adenine phosphoribosyltransferase (172 aa).

This sequence belongs to the purine/pyrimidine phosphoribosyltransferase family. Homodimer.

It is found in the cytoplasm. It carries out the reaction AMP + diphosphate = 5-phospho-alpha-D-ribose 1-diphosphate + adenine. Its pathway is purine metabolism; AMP biosynthesis via salvage pathway; AMP from adenine: step 1/1. Functionally, catalyzes a salvage reaction resulting in the formation of AMP, that is energically less costly than de novo synthesis. The sequence is that of Adenine phosphoribosyltransferase from Clostridium botulinum (strain Loch Maree / Type A3).